A 147-amino-acid chain; its full sequence is Hemoglobin subunit epsilon (147 aa).

In terms of domain architecture, Globin spans 3-147 (HLTAEEKSSV…VATALAHKYH (145 aa)). Residues Ser-14 and Ser-51 each carry the phosphoserine modification. 2 residues coordinate heme b: His-64 and His-93.

Belongs to the globin family. Heterotetramer of two alpha chains and two epsilon chains in early embryonic hemoglobin Gower-2; two zeta chains and two epsilon chains in early embryonic hemoglobin Gower-1. As to expression, red blood cells.

In terms of biological role, the epsilon chain is a beta-type chain of early mammalian embryonic hemoglobin. The polypeptide is Hemoglobin subunit epsilon (HBE1) (Carlito syrichta (Philippine tarsier)).